The primary structure comprises 56 residues: Lipase, thermostable (56 aa).

Belongs to the AB hydrolase superfamily. Pseudomonas lipase family.

It catalyses the reaction a triacylglycerol + H2O = a diacylglycerol + a fatty acid + H(+). This thermostable and solvent-tolerant lipase is rather nonspecific. It can synthesize both primary and secondary alcohol esters. Simple triglycerides of short and middle chain fatty acids (C&lt;13) are the preferred substrates. This Burkholderia cepacia (Pseudomonas cepacia) protein is Lipase, thermostable.